A 500-amino-acid polypeptide reads, in one-letter code: Aspartyl/glutamyl-tRNA(Asn/Gln) amidotransferase subunit B (500 aa).

This sequence belongs to the GatB/GatE family. GatB subfamily. In terms of assembly, heterotrimer of A, B and C subunits.

It carries out the reaction L-glutamyl-tRNA(Gln) + L-glutamine + ATP + H2O = L-glutaminyl-tRNA(Gln) + L-glutamate + ADP + phosphate + H(+). The catalysed reaction is L-aspartyl-tRNA(Asn) + L-glutamine + ATP + H2O = L-asparaginyl-tRNA(Asn) + L-glutamate + ADP + phosphate + 2 H(+). Its function is as follows. Allows the formation of correctly charged Asn-tRNA(Asn) or Gln-tRNA(Gln) through the transamidation of misacylated Asp-tRNA(Asn) or Glu-tRNA(Gln) in organisms which lack either or both of asparaginyl-tRNA or glutaminyl-tRNA synthetases. The reaction takes place in the presence of glutamine and ATP through an activated phospho-Asp-tRNA(Asn) or phospho-Glu-tRNA(Gln). This chain is Aspartyl/glutamyl-tRNA(Asn/Gln) amidotransferase subunit B, found in Clavibacter sepedonicus (Clavibacter michiganensis subsp. sepedonicus).